Consider the following 408-residue polypeptide: uncharacterized protein (408 aa).

The next 12 helical transmembrane spans lie at 9–29 (WFVLLFTFVFAIGMNSFRNSF), 49–69 (VSVSIFMITTGIVQFFVGFFI), 77–97 (IMALGAVCISASFLVLPYSPN), 100–120 (VFSAIYGVLGGIGYSCAVGVT), 135–155 (LALAILTNANSAGLLLLSPIW), 167–187 (TYTILGIVMAAVLLPLLVFGM), 216–236 (LIHILYFGVFTCGFTMGIIDA), 252–272 (GMMAAFGAFIIIGGLLAGWLS), 283–303 (SILFFIRLLSLICLLIPILGI), 308–328 (LWYFGFILLFGLSYTGVIPLT), 340–360 (LIGSLLGINFFIHQVAGALSV), and 373–393 (YLLIVAVCIVFVGLSAVIELV).

Belongs to the major facilitator superfamily.

It localises to the cell membrane. This is an uncharacterized protein from Bacillus subtilis (strain 168).